We begin with the raw amino-acid sequence, 48 residues long: Large ribosomal subunit protein bL32 (48 aa).

Residues 1-20 (MAVPKRRVSKTRAAKRRTHY) are compositionally biased toward basic residues. The interval 1 to 48 (MAVPKRRVSKTRAAKRRTHYKVSLPMPVKDKDGSYKMPHRANPTTKEY) is disordered.

Belongs to the bacterial ribosomal protein bL32 family.

This Campylobacter jejuni subsp. doylei (strain ATCC BAA-1458 / RM4099 / 269.97) protein is Large ribosomal subunit protein bL32.